The following is a 349-amino-acid chain: Isopentenyl-diphosphate delta-isomerase (349 aa).

Position 6-7 (6-7) interacts with substrate; the sequence is RK. Residues 62 to 64, S93, and N122 each bind FMN; that span reads AMT. Q152 lines the substrate pocket. E153 contributes to the Mg(2+) binding site. FMN-binding positions include K184, T214, 258–259, and 280–281; these read GG and AG.

It belongs to the IPP isomerase type 2 family. Homooctamer. Dimer of tetramers. The cofactor is FMN. Requires NADPH as cofactor. Mg(2+) is required as a cofactor.

It localises to the cytoplasm. It carries out the reaction isopentenyl diphosphate = dimethylallyl diphosphate. In terms of biological role, involved in the biosynthesis of isoprenoids. Catalyzes the 1,3-allylic rearrangement of the homoallylic substrate isopentenyl (IPP) to its allylic isomer, dimethylallyl diphosphate (DMAPP). The protein is Isopentenyl-diphosphate delta-isomerase of Bacillus cereus (strain ZK / E33L).